Reading from the N-terminus, the 55-residue chain is UPF0434 protein BPEN_388 (55 aa).

It belongs to the UPF0434 family.

This chain is UPF0434 protein BPEN_388, found in Blochmanniella pennsylvanica (strain BPEN).